Reading from the N-terminus, the 150-residue chain is 3-dehydroquinate dehydratase (150 aa).

Catalysis depends on Y25, which acts as the Proton acceptor. Substrate contacts are provided by N76, H82, and D89. The active-site Proton donor is H102. Residues 103 to 104 (LS) and R113 each bind substrate.

Belongs to the type-II 3-dehydroquinase family. As to quaternary structure, homododecamer.

The catalysed reaction is 3-dehydroquinate = 3-dehydroshikimate + H2O. It functions in the pathway metabolic intermediate biosynthesis; chorismate biosynthesis; chorismate from D-erythrose 4-phosphate and phosphoenolpyruvate: step 3/7. Catalyzes a trans-dehydration via an enolate intermediate. This Trichodesmium erythraeum (strain IMS101) protein is 3-dehydroquinate dehydratase.